The chain runs to 1194 residues: MVGLLLFFFPAIFLEVSLLPRSPGRKVLLAGASSQRSVARMDGDVIIGALFSVHHQPPAEKVPERKCGEIREQYGIQRVEAMFHTLDKINADPVLLPNITLGSEIRDSCWHSSVALEQSIEFIRDSLISIRDEKDGINRCLPDGQSLPPGRTKKPIAGVIGPGSSSVAIQVQNLLQLFDIPQIAYSATSIDLSDKTLYKYFLRVVPSDTLQARAMLDIVKRYNWTYVSAVHTEGNYGESGMDAFKELAAQEGLCIAHSDKIYSNAGEKSFDRLLRKLRERLPKARVVVCFCEGMTVRGLLSAMRRLGVVGEFSLIGSDGWADRDEVIEGYEVEANGGITIKLQSPEVRSFDDYFLKLRLDTNTRNPWFPEFWQHRFQCRLPGHLLENPNFKRICTGNESLEENYVQDSKMGFVINAIYAMAHGLQNMHHALCPGHVGLCDAMKPIDGSKLLDFLIKSSFIGVSGEEVWFDEKGDAPGRYDIMNLQYTEANRYDYVHVGTWHEGVLNIDDYKIQMNKSGVVRSVCSEPCLKGQIKVIRKGEVSCCWICTACKENEYVQDEFTCKACDLGWWPNADLTGCEPIPVRYLEWSNIESIIAIAFSCLGILVTLFVTLIFVLYRDTPVVKSSSRELCYIILAGIFLGYVCPFTLIAKPTTTSCYLQRLLVGLSSAMCYSALVTKTNRIARILAGSKKKICTRKPRFMSAWAQVIIASILISVQLTLVVTLIIMEPPMPILSYPSIKEVYLICNTSNLGVVAPLGYNGLLIMSCTYYAFKTRNVPANFNEAKYIAFTMYTTCIIWLAFVPIYFGSNYKIITTCFAVSLSVTVALGCMFTPKMYIIIAKPERNVRSAFTTSDVVRMHVGDGKLPCRSNTFLNIFRRKKAGAGNANSNGKSVSWSEPGGGQVPKGQHMWHRLSVHVKTNETACNQTAVIKPLTKSYQGSGKSLTFSDTSTKTLYNVEEEEDAQPIRFSPPGSPSMVVHRRVPSAATTPPLPSHLTAEETPLFLAEPALPKGLPPPLQQQQQPPPQQKSLMDQLQGVVSNFSTAIPDFHAVLAGPGGPGNGLRSLYPPPPPPQHLQMLPLQLSTFGEELVSPPADDDDDSERFKLLQEYVYEHEREGNTEEDELEEEEEDLQAASKLTPDDSPALTPPSPFRDSVASGSSVPSSPVSESVLCTPPNVSYASVILRDYKQSSSTL.

The signal sequence occupies residues Met-1–Leu-18. At Leu-19–Glu-592 the chain is on the extracellular side. A disulfide bridge links Cys-67 with Cys-109. Tyr-74 contacts L-glutamate. Asn-98 carries an N-linked (GlcNAc...) asparagine glycan. Residues Ser-165 and Ser-186–Thr-188 contribute to the L-glutamate site. N-linked (GlcNAc...) asparagine glycosylation is present at Asn-223. Tyr-236 is an L-glutamate binding site. An intrachain disulfide couples Cys-289 to Cys-291. Asp-318 is a binding site for L-glutamate. A disulfide bond links Cys-378 and Cys-394. A glycan (N-linked (GlcNAc...) asparagine) is linked at Asn-397. Lys-409 contacts L-glutamate. Cys-432 and Cys-439 form a disulfide bridge. An N-linked (GlcNAc...) asparagine glycan is attached at Asn-515. A helical membrane pass occupies residues Ser-593–Val-615. Residues Leu-616–Glu-629 are Cytoplasmic-facing. A helical transmembrane segment spans residues Leu-630 to Ala-650. Residues Lys-651–Tyr-658 are Extracellular-facing. A disulfide bridge connects residues Cys-657 and Cys-746. A helical transmembrane segment spans residues Leu-659–Asn-680. Residues Arg-681–Ala-703 are Cytoplasmic-facing. A helical transmembrane segment spans residues Trp-704–Met-727. The Extracellular segment spans residues Glu-728–Asn-750. A helical membrane pass occupies residues Leu-751–Phe-772. Residues Lys-773–Lys-785 lie on the Cytoplasmic side of the membrane. A helical membrane pass occupies residues Tyr-786–Gly-807. Over Ser-808–Thr-815 the chain is Extracellular. The chain crosses the membrane as a helical span at residues Cys-816–Ala-840. Over Lys-841–Leu-1194 the chain is Cytoplasmic. Ser-853 bears the Phosphoserine mark. Phosphothreonine is present on Thr-871. A disordered region spans residues Ala-883–Lys-905. Over residues Asn-885–Trp-895 the composition is skewed to polar residues. Residues Ser-894 and Ser-969 each carry the phosphoserine modification. Residues Pro-1007–Leu-1030 are disordered. A compositionally biased stretch (pro residues) spans Gly-1012–Gln-1026. Ser-1091 bears the Phosphoserine mark. The tract at residues His-1113–Thr-1173 is disordered. Over residues Thr-1119–Leu-1131 the composition is skewed to acidic residues. Ser-1142 bears the Phosphoserine mark. Position 1146 is a phosphothreonine (Thr-1146). The residue at position 1149 (Ser-1149) is a Phosphoserine. A compositionally biased stretch (low complexity) spans Ser-1154–Val-1170.

Belongs to the G-protein coupled receptor 3 family. As to quaternary structure, homodimer; disulfide-linked. The PPXXF motif binds HOMER1, HOMER2 and HOMER3. Interacts with TAMALIN. Interacts with RYR1, RYR2, ITPR1, SHANK1 and SHANK3. Interacts with SIAH1. Detected in brain.

The protein resides in the cell membrane. It localises to the postsynaptic cell membrane. The protein localises to the cell projection. It is found in the dendrite. Its activity is regulated as follows. Signaling is inhibited by the antagonist LY341495. The LY341495 binding site partially overlaps with the glutamate binding site. Signaling is also inhibited by synthetic allosteric regulators, such as FITM (4-fluoro-N-(4-(6-(isopropylamino)pyrimidin-4-yl)thiazol-2-yl)-N-methylbenzamide) that bind in a pocket between the transmembrane helices. G-protein coupled receptor for glutamate. Ligand binding causes a conformation change that triggers signaling via guanine nucleotide-binding proteins (G proteins) and modulates the activity of down-stream effectors. Signaling activates a phosphatidylinositol-calcium second messenger system. May participate in the central action of glutamate in the CNS, such as long-term potentiation in the hippocampus and long-term depression in the cerebellum. May function in the light response in the retina. Induces GRID1 and GRID2 cation-channel activation via GNAQ-PLC-PKC pathway in dopaminergic neurons and cerebellar Purkinje cell, respectively. The sequence is that of Metabotropic glutamate receptor 1 (GRM1) from Homo sapiens (Human).